The following is a 508-amino-acid chain: Probable G-protein coupled receptor 101 (508 aa).

Residues 1-35 (MTSTCTNSTRESNSSHTCMPLSKMPISLAHGIIRS) lie on the Extracellular side of the membrane. N-linked (GlcNAc...) asparagine glycans are attached at residues N7 and N13. The helical transmembrane segment at 36 to 56 (TVLVIFLAASFVGNIVLALVL) threads the bilayer. Topologically, residues 57–68 (QRKPQLLQVTNR) are cytoplasmic. Residues 69-89 (FIFNLLVTDLLQISLVAPWVV) traverse the membrane as a helical segment. Residues 90–106 (ATSVPLFWPLNSHFCTA) are Extracellular-facing. A disulfide bridge connects residues C104 and C182. A helical membrane pass occupies residues 107–127 (LVSLTHLFAFASVNTIVVVSV). Residues 128-149 (DRYLSIIHPLSYPSKMTQRRGY) are Cytoplasmic-facing. A helical membrane pass occupies residues 150-170 (LLLYGTWIVAILQSTPPLYGW). Residues 171–196 (GQAAFDERNALCSMIWGASPSYTILS) are Extracellular-facing. Residues 197-217 (VVSFIVIPLIVMIACYSVVFC) traverse the membrane as a helical segment. At 218–399 (AARRQHALLY…PRCYQCKAAK (182 aa)) the chain is on the cytoplasmic side. The interval 244 to 338 (NEDEEGAEKK…ENSMKADKGR (95 aa)) is disordered. Basic and acidic residues-rich tracts occupy residues 250–288 (AEKK…KAKE) and 318–338 (MEGK…DKGR). The chain crosses the membrane as a helical span at residues 400–420 (VIFIIIFSYVLSLGPYCFLAV). Topologically, residues 421–433 (LAVWVDVETQVPQ) are extracellular. Residues 434–454 (WVITIIIWLFFLQCCIHPYVY) traverse the membrane as a helical segment. Topologically, residues 455–508 (GYMHKTIKKEIQDMLKKFFCKEKPPKEDSHPDLPGTEGGTEGKIVPSYDSATFP) are cytoplasmic. Over residues 476 to 485 (EKPPKEDSHP) the composition is skewed to basic and acidic residues. The tract at residues 476–508 (EKPPKEDSHPDLPGTEGGTEGKIVPSYDSATFP) is disordered.

This sequence belongs to the G-protein coupled receptor 1 family.

It localises to the cell membrane. Functionally, orphan receptor. The protein is Probable G-protein coupled receptor 101 (GPR101) of Homo sapiens (Human).